The following is a 165-amino-acid chain: Chaperone protein SicA (165 aa).

Belongs to the LcrH/SycD chaperone family. In terms of assembly, dimer or higher-order oligomers.

Its subcellular location is the cytoplasm. Type III secretion-associated chaperone required for SipB and SipC stabilization. Prevents premature association of SipB with SipC, which may lead to their targeting for degradation. Along with InvF, required for transcription activation of sigDE (sopB pipC), sicAsipBCDA, and sopE. In Salmonella dublin, this protein is Chaperone protein SicA (sicA).